The primary structure comprises 324 residues: 2-oxoisovalerate dehydrogenase subunit beta (324 aa).

Residues E29, 58 to 60 (LSE), Q82, and 86 to 89 (YIFP) each bind thiamine diphosphate. Residues 83 to 86 (FADY) and H129 each bind substrate. Residue H129 is the Proton acceptor of the active site.

Heterotetramer of two alpha and two beta chains. Directly associated with ODBA in the E1 complex. Requires thiamine diphosphate as cofactor.

It carries out the reaction N(6)-[(R)-lipoyl]-L-lysyl-[protein] + 3-methyl-2-oxobutanoate + H(+) = N(6)-[(R)-S(8)-2-methylpropanoyldihydrolipoyl]-L-lysyl-[protein] + CO2. The branched-chain alpha-keto dehydrogenase complex catalyzes the overall conversion of alpha-keto acids to acyl-CoA and CO(2). It contains multiple copies of three enzymatic components: branched-chain alpha-keto acid decarboxylase (E1), lipoamide acyltransferase (E2) and lipoamide dehydrogenase (E3). The chain is 2-oxoisovalerate dehydrogenase subunit beta from Thermus thermophilus (strain ATCC BAA-163 / DSM 7039 / HB27).